Reading from the N-terminus, the 78-residue chain is Large ribosomal subunit protein bL31 (78 aa).

It belongs to the bacterial ribosomal protein bL31 family. Type A subfamily. As to quaternary structure, part of the 50S ribosomal subunit.

Functionally, binds the 23S rRNA. This is Large ribosomal subunit protein bL31 (rpmE) from Rickettsia felis (strain ATCC VR-1525 / URRWXCal2) (Rickettsia azadi).